A 107-amino-acid polypeptide reads, in one-letter code: MKNPLANLMQQAQRFQETFQKTQEEIAATEIQAESGGGLVKIRMNGKREVLKVEIDPSLRQEEHEVLEDLIAAAFNDGVRRVAKLKQEKMAGLTGSLGIPPGFNLPF.

The protein belongs to the YbaB/EbfC family. As to quaternary structure, homodimer.

It localises to the cytoplasm. Its subcellular location is the nucleoid. Binds to DNA and alters its conformation. May be involved in regulation of gene expression, nucleoid organization and DNA protection. This Methylococcus capsulatus (strain ATCC 33009 / NCIMB 11132 / Bath) protein is Nucleoid-associated protein MCA1327.